The primary structure comprises 155 residues: Large ribosomal subunit protein uL30 (155 aa).

Belongs to the universal ribosomal protein uL30 family. As to quaternary structure, part of the 50S ribosomal subunit.

This is Large ribosomal subunit protein uL30 from Nanoarchaeum equitans (strain Kin4-M).